The chain runs to 143 residues: Large ribosomal subunit protein uL16 (143 aa).

Positions 1-17 (MLQPKKTKFRRSQKGRM) are enriched in basic residues. The tract at residues 1–25 (MLQPKKTKFRRSQKGRMKGNAQRGN) is disordered.

The protein belongs to the universal ribosomal protein uL16 family. As to quaternary structure, part of the 50S ribosomal subunit.

Functionally, binds 23S rRNA and is also seen to make contacts with the A and possibly P site tRNAs. The chain is Large ribosomal subunit protein uL16 from Azobacteroides pseudotrichonymphae genomovar. CFP2.